Here is a 530-residue protein sequence, read N- to C-terminus: Calcium-dependent protein kinase 14 (530 aa).

The N-myristoyl glycine moiety is linked to residue G2. One can recognise a Protein kinase domain in the interval 54-312; it reads YKLGRELGRG…AQQVLDHPWI (259 aa). ATP contacts are provided by residues 60–68 and K83; that span reads LGRGEFGVT. D178 (proton acceptor) is an active-site residue. S218 bears the Phosphoserine mark. The autoinhibitory domain stretch occupies residues 318–348; sequence ASNVSLGETVRARLKQFSVMNKLKKRALRVI. EF-hand domains are found at residues 355–390, 391–426, 427–462, and 463–498; these read EETS…LGIV, VPQD…IRKL, GNDE…DVDT, and TSEE…GTDW. Positions 368, 370, 374, 379, 404, 406, 408, 410, 415, 440, 442, 444, 446, 451, 476, 478, 480, and 482 each coordinate Ca(2+). S484 carries the post-translational modification Phosphoserine. Ca(2+) is bound at residue E487.

Belongs to the protein kinase superfamily. Ser/Thr protein kinase family. CDPK subfamily.

Its subcellular location is the membrane. The catalysed reaction is L-seryl-[protein] + ATP = O-phospho-L-seryl-[protein] + ADP + H(+). The enzyme catalyses L-threonyl-[protein] + ATP = O-phospho-L-threonyl-[protein] + ADP + H(+). Activated by calcium. Autophosphorylation may play an important role in the regulation of the kinase activity. May play a role in signal transduction pathways that involve calcium as a second messenger. This is Calcium-dependent protein kinase 14 (CPK14) from Arabidopsis thaliana (Mouse-ear cress).